We begin with the raw amino-acid sequence, 214 residues long: Endosomal/vacuolar adapter protein YPT35 (214 aa).

The segment at 1–63 (MNDKISFLPP…ATITRTRPRR (63 aa)) is disordered. The PxP motif lies at 5–15 (ISFLPPEPIQL). Residues 16–31 (LDEDSTEPELDIDSQQ) show a composition bias toward acidic residues. Over residues 38 to 58 (SASNSNDSTSHSNDCGATITR) the composition is skewed to low complexity. Phosphoserine occurs at positions 65 and 66. Residues 73-213 (FQKAHVSDCT…IQFLEPSKRV (141 aa)) enclose the PX domain.

The protein belongs to the YPT35 family. As to quaternary structure, interacts with RBD2, YIF1, YIP1 and YIP4.

The protein localises to the endosome membrane. The protein resides in the vacuole membrane. Functionally, recruits the lipid transfer protein VPS13 to endosomal and vacuolar membranes. This is Endosomal/vacuolar adapter protein YPT35 (YPT35) from Saccharomyces cerevisiae (strain YJM789) (Baker's yeast).